The sequence spans 123 residues: MPTIQQLIRNARQPIRSRTKSPALRGCPQRRGVCIRVYTTTPKKPNSALRKVARVRLTSGFEITAYIPGIGHNLQEHSVVSVRGGRVKDLPGVRYHIVRGTLDAVGVKDRKQGRSRYGVKKPK.

This sequence belongs to the universal ribosomal protein uS12 family. As to quaternary structure, part of the 30S ribosomal subunit.

The protein resides in the plastid. It localises to the chloroplast. In terms of biological role, with S4 and S5 plays an important role in translational accuracy. Located at the interface of the 30S and 50S subunits. The sequence is that of Small ribosomal subunit protein uS12cz/uS12cy (rps12-A) from Psilotum nudum (Whisk fern).